Consider the following 200-residue polypeptide: Inner membrane-spanning protein YciB (200 aa).

The next 6 helical transmembrane spans lie at 1-21 (MPPL…FFAN), 37-57 (IGAP…IALA), 66-86 (LPIM…LTLW), 103-123 (LFGG…GYVF), 136-156 (KLTL…EIVW), and 167-187 (FKVW…MPLI).

This sequence belongs to the YciB family.

The protein resides in the cell inner membrane. Plays a role in cell envelope biogenesis, maintenance of cell envelope integrity and membrane homeostasis. This chain is Inner membrane-spanning protein YciB, found in Brucella suis biovar 1 (strain 1330).